Reading from the N-terminus, the 404-residue chain is Cysteine desulfurase IscS (404 aa).

Pyridoxal 5'-phosphate is bound by residues 75-76 (AT), asparagine 155, glutamine 183, and 203-205 (SAH). At lysine 206 the chain carries N6-(pyridoxal phosphate)lysine. Threonine 243 lines the pyridoxal 5'-phosphate pocket. Cysteine 328 serves as the catalytic Cysteine persulfide intermediate. [2Fe-2S] cluster is bound at residue cysteine 328.

This sequence belongs to the class-V pyridoxal-phosphate-dependent aminotransferase family. NifS/IscS subfamily. As to quaternary structure, homodimer. Forms a heterotetramer with IscU, interacts with other sulfur acceptors. Requires pyridoxal 5'-phosphate as cofactor.

Its subcellular location is the cytoplasm. The catalysed reaction is (sulfur carrier)-H + L-cysteine = (sulfur carrier)-SH + L-alanine. It functions in the pathway cofactor biosynthesis; iron-sulfur cluster biosynthesis. In terms of biological role, master enzyme that delivers sulfur to a number of partners involved in Fe-S cluster assembly, tRNA modification or cofactor biosynthesis. Catalyzes the removal of elemental sulfur atoms from cysteine to produce alanine. Functions as a sulfur delivery protein for Fe-S cluster synthesis onto IscU, an Fe-S scaffold assembly protein, as well as other S acceptor proteins. The polypeptide is Cysteine desulfurase IscS (Aeromonas hydrophila subsp. hydrophila (strain ATCC 7966 / DSM 30187 / BCRC 13018 / CCUG 14551 / JCM 1027 / KCTC 2358 / NCIMB 9240 / NCTC 8049)).